Consider the following 372-residue polypeptide: Alanine racemase (372 aa).

The Proton acceptor; specific for D-alanine role is filled by lysine 41. Lysine 41 is modified (N6-(pyridoxal phosphate)lysine). Arginine 139 provides a ligand contact to substrate. The active-site Proton acceptor; specific for L-alanine is the tyrosine 268. Residue methionine 316 participates in substrate binding.

It belongs to the alanine racemase family. It depends on pyridoxal 5'-phosphate as a cofactor.

The enzyme catalyses L-alanine = D-alanine. The protein operates within amino-acid biosynthesis; D-alanine biosynthesis; D-alanine from L-alanine: step 1/1. Functionally, catalyzes the interconversion of L-alanine and D-alanine. May also act on other amino acids. The protein is Alanine racemase (alr) of Borreliella burgdorferi (strain ATCC 35210 / DSM 4680 / CIP 102532 / B31) (Borrelia burgdorferi).